Here is a 252-residue protein sequence, read N- to C-terminus: Pyrroloquinoline-quinone synthase (252 aa).

It belongs to the PqqC family.

The catalysed reaction is 6-(2-amino-2-carboxyethyl)-7,8-dioxo-1,2,3,4,7,8-hexahydroquinoline-2,4-dicarboxylate + 3 O2 = pyrroloquinoline quinone + 2 H2O2 + 2 H2O + H(+). Its pathway is cofactor biosynthesis; pyrroloquinoline quinone biosynthesis. Functionally, ring cyclization and eight-electron oxidation of 3a-(2-amino-2-carboxyethyl)-4,5-dioxo-4,5,6,7,8,9-hexahydroquinoline-7,9-dicarboxylic-acid to PQQ. In Acinetobacter baumannii (strain AB307-0294), this protein is Pyrroloquinoline-quinone synthase.